Here is a 169-residue protein sequence, read N- to C-terminus: uncharacterized protein (169 aa).

Residue Ser165 is modified to Phosphoserine.

This is an uncharacterized protein from Drosophila melanogaster (Fruit fly).